The sequence spans 215 residues: Small ribosomal subunit protein uS3 (215 aa).

The KH type-2 domain occupies 38 to 106 (LRAFLKKKLF…EVLIDIQEIR (69 aa)).

Belongs to the universal ribosomal protein uS3 family. In terms of assembly, part of the 30S ribosomal subunit. Forms a tight complex with proteins S10 and S14.

In terms of biological role, binds the lower part of the 30S subunit head. Binds mRNA in the 70S ribosome, positioning it for translation. This chain is Small ribosomal subunit protein uS3, found in Desulforapulum autotrophicum (strain ATCC 43914 / DSM 3382 / VKM B-1955 / HRM2) (Desulfobacterium autotrophicum).